The sequence spans 265 residues: MQIRQSVKLKKPLIHYITNPISINDCANIILAAGAKPIMAEHPLEVSEITSVSKSLGVNLGNITDNKMKSMLISGKTAYENKIPQVIDLVGVGCSKLRLDYAKKFILECHPNVIKGNMSEIKAIYGIKSSAKGIDVGACDIITEQNFDENIEMIKRLSMETGSVVAATGVVDIISNGTYTYIISNGCEMLSMITGTGCMLTGIIASYISSGNILEGTALAIVLMGICGELSQHVKGTGSFRNELIDNIFSISDDIIIKKIRINSY.

Position 39 (Met-39) interacts with substrate. Lys-115 and Thr-168 together coordinate ATP. Residue Gly-195 participates in substrate binding.

This sequence belongs to the Thz kinase family. Mg(2+) serves as cofactor.

It catalyses the reaction 5-(2-hydroxyethyl)-4-methylthiazole + ATP = 4-methyl-5-(2-phosphooxyethyl)-thiazole + ADP + H(+). It participates in cofactor biosynthesis; thiamine diphosphate biosynthesis; 4-methyl-5-(2-phosphoethyl)-thiazole from 5-(2-hydroxyethyl)-4-methylthiazole: step 1/1. Its function is as follows. Catalyzes the phosphorylation of the hydroxyl group of 4-methyl-5-beta-hydroxyethylthiazole (THZ). The chain is Hydroxyethylthiazole kinase 2 from Clostridium botulinum (strain Okra / Type B1).